A 378-amino-acid chain; its full sequence is Spermidine/putrescine import ATP-binding protein PotA (378 aa).

The region spanning 18 to 248 (VQLAGIRKCF…PKNLFVAGFI (231 aa)) is the ABC transporter domain. 50–57 (GPSGCGKT) contributes to the ATP binding site.

It belongs to the ABC transporter superfamily. Spermidine/putrescine importer (TC 3.A.1.11.1) family. As to quaternary structure, the complex is composed of two ATP-binding proteins (PotA), two transmembrane proteins (PotB and PotC) and a solute-binding protein (PotD).

Its subcellular location is the cell inner membrane. It catalyses the reaction ATP + H2O + polyamine-[polyamine-binding protein]Side 1 = ADP + phosphate + polyamineSide 2 + [polyamine-binding protein]Side 1.. In terms of biological role, part of the ABC transporter complex PotABCD involved in spermidine/putrescine import. Responsible for energy coupling to the transport system. This chain is Spermidine/putrescine import ATP-binding protein PotA, found in Shigella flexneri.